The chain runs to 98 residues: Putative defensin-like protein 239 (98 aa).

Residues 1–23 (MRYTTSFIGLCFLIFLLKNLVNG) form the signal peptide. Intrachain disulfides connect Cys29/Cys89, Cys39/Cys69, Cys47/Cys86, and Cys67/Cys88.

The protein belongs to the DEFL family.

The protein resides in the secreted. The protein is Putative defensin-like protein 239 (SCRL17) of Arabidopsis thaliana (Mouse-ear cress).